We begin with the raw amino-acid sequence, 302 residues long: tRNA dimethylallyltransferase (302 aa).

Residue 9 to 16 participates in ATP binding; sequence GPTGTGKS. 11–16 serves as a coordination point for substrate; that stretch reads TGTGKS.

This sequence belongs to the IPP transferase family. As to quaternary structure, monomer. Mg(2+) is required as a cofactor.

The enzyme catalyses adenosine(37) in tRNA + dimethylallyl diphosphate = N(6)-dimethylallyladenosine(37) in tRNA + diphosphate. Its function is as follows. Catalyzes the transfer of a dimethylallyl group onto the adenine at position 37 in tRNAs that read codons beginning with uridine, leading to the formation of N6-(dimethylallyl)adenosine (i(6)A). This is tRNA dimethylallyltransferase from Mycolicibacterium smegmatis (strain ATCC 700084 / mc(2)155) (Mycobacterium smegmatis).